We begin with the raw amino-acid sequence, 359 residues long: 3-dehydroquinate synthase (359 aa).

NAD(+) contacts are provided by residues 71-76 (DGEQFK), 105-109 (GVIGD), 129-130 (TT), K142, K151, and 169-172 (CLQT). Residues E184, H247, and H264 each coordinate Zn(2+).

It belongs to the sugar phosphate cyclases superfamily. Dehydroquinate synthase family. It depends on NAD(+) as a cofactor. Co(2+) serves as cofactor. Requires Zn(2+) as cofactor.

The protein resides in the cytoplasm. It catalyses the reaction 7-phospho-2-dehydro-3-deoxy-D-arabino-heptonate = 3-dehydroquinate + phosphate. The protein operates within metabolic intermediate biosynthesis; chorismate biosynthesis; chorismate from D-erythrose 4-phosphate and phosphoenolpyruvate: step 2/7. In terms of biological role, catalyzes the conversion of 3-deoxy-D-arabino-heptulosonate 7-phosphate (DAHP) to dehydroquinate (DHQ). This Shewanella oneidensis (strain ATCC 700550 / JCM 31522 / CIP 106686 / LMG 19005 / NCIMB 14063 / MR-1) protein is 3-dehydroquinate synthase.